The primary structure comprises 345 residues: Dihydroorotate dehydrogenase (quinone) (345 aa).

FMN-binding positions include 65–69 (AGLDK) and threonine 89. Position 69 (lysine 69) interacts with substrate. 114–118 (NRLGF) is a binding site for substrate. Asparagine 146 and asparagine 179 together coordinate FMN. Asparagine 179 lines the substrate pocket. Serine 182 (nucleophile) is an active-site residue. Asparagine 184 serves as a coordination point for substrate. 2 residues coordinate FMN: lysine 224 and threonine 252. Residue 253–254 (NT) coordinates substrate. Residues glycine 275, glycine 304, and 325–326 (YT) contribute to the FMN site.

This sequence belongs to the dihydroorotate dehydrogenase family. Type 2 subfamily. In terms of assembly, monomer. FMN serves as cofactor.

The protein resides in the cell membrane. It carries out the reaction (S)-dihydroorotate + a quinone = orotate + a quinol. It functions in the pathway pyrimidine metabolism; UMP biosynthesis via de novo pathway; orotate from (S)-dihydroorotate (quinone route): step 1/1. Its function is as follows. Catalyzes the conversion of dihydroorotate to orotate with quinone as electron acceptor. This is Dihydroorotate dehydrogenase (quinone) from Leptothrix cholodnii (strain ATCC 51168 / LMG 8142 / SP-6) (Leptothrix discophora (strain SP-6)).